The chain runs to 236 residues: Eukaryotic translation initiation factor 3 subunit K (236 aa).

The PCI domain occupies 48-218; it reads CDCNANRTLL…EAKKAEIRED (171 aa).

It belongs to the eIF-3 subunit K family.

Its subcellular location is the cytoplasm. Component of the eukaryotic translation initiation factor 3 (eIF-3) complex, which is involved in protein synthesis of a specialized repertoire of mRNAs and, together with other initiation factors, stimulates binding of mRNA and methionyl-tRNAi to the 40S ribosome. The eIF-3 complex specifically targets and initiates translation of a subset of mRNAs involved in cell proliferation. This chain is Eukaryotic translation initiation factor 3 subunit K, found in Pyricularia oryzae (strain Y34) (Rice blast fungus).